A 312-amino-acid polypeptide reads, in one-letter code: Malate dehydrogenase (312 aa).

Residues 7–13 and D34 contribute to the NAD(+) site; that span reads GAAGGIG. The substrate site is built by R81 and R87. NAD(+) is bound by residues N94 and 117–119; that span reads ITN. Substrate-binding residues include N119 and R153. H177 acts as the Proton acceptor in catalysis. M227 lines the NAD(+) pocket.

This sequence belongs to the LDH/MDH superfamily. MDH type 1 family. As to quaternary structure, homodimer.

It carries out the reaction (S)-malate + NAD(+) = oxaloacetate + NADH + H(+). Its function is as follows. Catalyzes the reversible oxidation of malate to oxaloacetate. This chain is Malate dehydrogenase, found in Salmonella arizonae (strain ATCC BAA-731 / CDC346-86 / RSK2980).